The chain runs to 290 residues: CTP-dependent diacylglycerol kinase 1 (290 aa).

Residues methionine 1–alanine 33 are disordered. Residues methionine 1–lysine 77 are Lumenal-facing. A glycan (N-linked (GlcNAc...) asparagine) is linked at asparagine 11. The span at arginine 23–alanine 33 shows a compositional bias: polar residues. Phosphoserine occurs at positions 44, 45, and 46. Residues valine 78–isoleucine 95 traverse the membrane as a helical segment. The Cytoplasmic portion of the chain corresponds to asparagine 96–proline 103. Residues leucine 104–phenylalanine 124 traverse the membrane as a helical segment. Topologically, residues asparagine 125–glutamate 140 are lumenal. The helical transmembrane segment at isoleucine 141–phenylalanine 161 threads the bilayer. Residues serine 162 to lysine 163 are Cytoplasmic-facing. Residues aspartate 164–glycine 184 traverse the membrane as a helical segment. Topologically, residues arginine 185–serine 203 are lumenal. Asparagine 197 is a glycosylation site (N-linked (GlcNAc...) asparagine). Residues isoleucine 204 to alanine 224 traverse the membrane as a helical segment. Residues tyrosine 225–serine 244 lie on the Cytoplasmic side of the membrane. A helical transmembrane segment spans residues leucine 245–phenylalanine 265. Over asparagine 266–lysine 290 the chain is Lumenal. Asparagine 270 carries N-linked (GlcNAc...) asparagine glycosylation.

This sequence belongs to the DGK1 family. It depends on Ca(2+) as a cofactor. The cofactor is Mg(2+). CKII-mediated phosphorylation of Ser-45 and Ser-46 regulates its function in the production of PA.

It localises to the endoplasmic reticulum membrane. Its subcellular location is the nucleus membrane. It catalyses the reaction a 1,2-diacyl-sn-glycerol + CTP = a 1,2-diacyl-sn-glycero-3-phosphate + CDP + H(+). It carries out the reaction 1,2-di-(9Z-octadecenoyl)-sn-glycerol + CTP = 1,2-di-(9Z-octadecenoyl)-sn-glycero-3-phosphate + CDP + H(+). With respect to regulation, inhibited by N-ethylmaleimide, dCTP, and sphingoid bases including sphinganine, sphingosine and phytosphingosine. DAG pyrophosphate, cardiolipin, CDP-DAG, and lyso-PA inhibited activity by 23-66%. Also inhibited by Ca(2+) concentrations of more than 1 mM, by addition of EDTA or EGTA at 5 mM, and by 5 mM Mn(2+) and Zn(2+). Stimulated by major membrane phospholipids including phosphatidylcholine, phosphatidylethanolamine, phosphatidylinositol, phosphatidylserine, phosphatidylglycerol, and phosphatidate. Also stimulated to a maximum by addition of TritonX-100 at a concentration of 1 mM, followed by an apparent inhibition of activity at concentrations above 1 mM. Functionally, CTP-dependent diacylglycerol kinase that catalyzes the phosphorylation of diacylglycerol (DAG) to phosphatidate (PA). Controls phosphatidate levels at the nuclear envelope. Counteracts the activity of PA phosphatase PAH1/SMP2, controlling the levels of PA and DAG for the synthesis of triacylglycerol and membrane phospholipids. May be involved in vesicle trafficking between the endoplasmic reticulum and the Golgi apparatus. Required to convert triacylglycerol-derived DAG to PA for phospholipid synthesis during growth resumption from stationary phase in the absence of de novo fatty acid synthesis. Involved in the resistance to nickel chloride and nalidixic acid. This is CTP-dependent diacylglycerol kinase 1 (DGK1) from Saccharomyces cerevisiae (strain ATCC 204508 / S288c) (Baker's yeast).